Consider the following 428-residue polypeptide: Enolase (428 aa).

Glutamine 162 contacts (2R)-2-phosphoglycerate. Glutamate 204 functions as the Proton donor in the catalytic mechanism. Residues aspartate 241, glutamate 283, and aspartate 310 each coordinate Mg(2+). Residues lysine 335, arginine 364, serine 365, and lysine 386 each coordinate (2R)-2-phosphoglycerate. Catalysis depends on lysine 335, which acts as the Proton acceptor.

The protein belongs to the enolase family. It depends on Mg(2+) as a cofactor.

Its subcellular location is the cytoplasm. The protein localises to the secreted. It localises to the cell surface. The catalysed reaction is (2R)-2-phosphoglycerate = phosphoenolpyruvate + H2O. The protein operates within carbohydrate degradation; glycolysis; pyruvate from D-glyceraldehyde 3-phosphate: step 4/5. Functionally, catalyzes the reversible conversion of 2-phosphoglycerate (2-PG) into phosphoenolpyruvate (PEP). It is essential for the degradation of carbohydrates via glycolysis. In Rhodococcus erythropolis (strain PR4 / NBRC 100887), this protein is Enolase.